We begin with the raw amino-acid sequence, 1007 residues long: Beta-galactosidase A (1007 aa).

Residues 1 to 18 (MKLSSACAIALLAAQAAG) form the signal peptide. Substrate-binding positions include tyrosine 96 and 140–142 (NAE). N-linked (GlcNAc...) asparagine glycosylation occurs at asparagine 156. Asparagine 199 lines the substrate pocket. Catalysis depends on glutamate 200, which acts as the Proton donor. 2 disulfides stabilise this stretch: cysteine 205-cysteine 206 and cysteine 266-cysteine 315. Catalysis depends on glutamate 298, which acts as the Nucleophile. Position 364 (tyrosine 364) interacts with substrate. Asparagine 402, asparagine 422, asparagine 478, asparagine 522, asparagine 622, asparagine 739, asparagine 760, asparagine 777, asparagine 805, and asparagine 914 each carry an N-linked (GlcNAc...) asparagine glycan.

Belongs to the glycosyl hydrolase 35 family.

The protein localises to the secreted. It carries out the reaction Hydrolysis of terminal non-reducing beta-D-galactose residues in beta-D-galactosides.. Its function is as follows. Cleaves beta-linked terminal galactosyl residues from gangliosides, glycoproteins, and glycosaminoglycans. The protein is Beta-galactosidase A (lacA) of Aspergillus niger (strain ATCC MYA-4892 / CBS 513.88 / FGSC A1513).